We begin with the raw amino-acid sequence, 148 residues long: Nucleoside diphosphate kinase (148 aa).

ATP is bound by residues Lys-9, Phe-57, Arg-85, Thr-91, Arg-102, and Asn-112. The Pros-phosphohistidine intermediate role is filled by His-115.

Belongs to the NDK family. Mg(2+) is required as a cofactor.

The catalysed reaction is a 2'-deoxyribonucleoside 5'-diphosphate + ATP = a 2'-deoxyribonucleoside 5'-triphosphate + ADP. The enzyme catalyses a ribonucleoside 5'-diphosphate + ATP = a ribonucleoside 5'-triphosphate + ADP. Its function is as follows. Major role in the synthesis of nucleoside triphosphates other than ATP. The ATP gamma phosphate is transferred to the NDP beta phosphate via a ping-pong mechanism, using a phosphorylated active-site intermediate. The sequence is that of Nucleoside diphosphate kinase from Helianthus annuus (Common sunflower).